The sequence spans 213 residues: Large ribosomal subunit protein uL1 (213 aa).

This sequence belongs to the universal ribosomal protein uL1 family. As to quaternary structure, part of the 50S ribosomal subunit.

Functionally, binds directly to 23S rRNA. Probably involved in E site tRNA release. Protein L1 is also a translational repressor protein, it controls the translation of its operon by binding to its mRNA. This is Large ribosomal subunit protein uL1 from Methanococcus voltae.